Here is an 83-residue protein sequence, read N- to C-terminus: MKILIFIIASFMLIGVECKEGYPMGRNGCKIPCAINDNICKTECQAKWKQSDGYCYSPGMSCYCTNLPEDAEVWDFSNIKCRG.

A signal peptide spans 1–18 (MKILIFIIASFMLIGVEC). An LCN-type CS-alpha/beta domain is found at 19 to 82 (KEGYPMGRNG…VWDFSNIKCR (64 aa)). 4 cysteine pairs are disulfide-bonded: C29–C81, C33–C55, C40–C62, and C44–C64.

The protein belongs to the long (4 C-C) scorpion toxin superfamily. Sodium channel inhibitor family. Beta subfamily. In terms of tissue distribution, expressed by the venom gland.

The protein localises to the secreted. Functionally, beta toxins bind voltage-independently at site-4 of sodium channels (Nav) and shift the voltage of activation toward more negative potentials thereby affecting sodium channel activation and promoting spontaneous and repetitive firing. The sequence is that of Putative beta-neurotoxin RjAa17f from Rhopalurus junceus (Caribbean blue scorpion).